The following is a 402-amino-acid chain: S-adenosylmethionine synthase (402 aa).

His16 is an ATP binding site. Asp18 is a binding site for Mg(2+). Residue Glu44 participates in K(+) binding. L-methionine contacts are provided by Glu57 and Gln103. The segment at 103–113 is flexible loop; the sequence is QSPDIAQGVDT. ATP is bound by residues 178–180, 249–250, Asp258, 264–265, Ala281, and Lys285; these read DGK, KF, and RK. Residue Asp258 coordinates L-methionine. Lys289 provides a ligand contact to L-methionine.

Belongs to the AdoMet synthase family. In terms of assembly, homotetramer; dimer of dimers. It depends on Mg(2+) as a cofactor. K(+) serves as cofactor.

It localises to the cytoplasm. It catalyses the reaction L-methionine + ATP + H2O = S-adenosyl-L-methionine + phosphate + diphosphate. It participates in amino-acid biosynthesis; S-adenosyl-L-methionine biosynthesis; S-adenosyl-L-methionine from L-methionine: step 1/1. Its function is as follows. Catalyzes the formation of S-adenosylmethionine (AdoMet) from methionine and ATP. The overall synthetic reaction is composed of two sequential steps, AdoMet formation and the subsequent tripolyphosphate hydrolysis which occurs prior to release of AdoMet from the enzyme. The sequence is that of S-adenosylmethionine synthase from Mycolicibacterium gilvum (strain PYR-GCK) (Mycobacterium gilvum (strain PYR-GCK)).